Here is a 67-residue protein sequence, read N- to C-terminus: Small ribosomal subunit protein eS17 (67 aa).

This sequence belongs to the eukaryotic ribosomal protein eS17 family.

This is Small ribosomal subunit protein eS17 from Thermococcus sibiricus (strain DSM 12597 / MM 739).